The chain runs to 169 residues: S-ribosylhomocysteine lyase (169 aa).

Residues histidine 54, histidine 58, and cysteine 128 each coordinate Fe cation.

This sequence belongs to the LuxS family. In terms of assembly, homodimer. It depends on Fe cation as a cofactor.

It carries out the reaction S-(5-deoxy-D-ribos-5-yl)-L-homocysteine = (S)-4,5-dihydroxypentane-2,3-dione + L-homocysteine. In terms of biological role, involved in the synthesis of autoinducer 2 (AI-2) which is secreted by bacteria and is used to communicate both the cell density and the metabolic potential of the environment. The regulation of gene expression in response to changes in cell density is called quorum sensing. Catalyzes the transformation of S-ribosylhomocysteine (RHC) to homocysteine (HC) and 4,5-dihydroxy-2,3-pentadione (DPD). The sequence is that of S-ribosylhomocysteine lyase from Shewanella oneidensis (strain ATCC 700550 / JCM 31522 / CIP 106686 / LMG 19005 / NCIMB 14063 / MR-1).